Reading from the N-terminus, the 302-residue chain is 4-diphosphocytidyl-2-C-methyl-D-erythritol kinase (302 aa).

The active site involves lysine 32. 115 to 125 contributes to the ATP binding site; the sequence is PMGGGVGGGSS. The active site involves aspartate 157.

The protein belongs to the GHMP kinase family. IspE subfamily.

The enzyme catalyses 4-CDP-2-C-methyl-D-erythritol + ATP = 4-CDP-2-C-methyl-D-erythritol 2-phosphate + ADP + H(+). It functions in the pathway isoprenoid biosynthesis; isopentenyl diphosphate biosynthesis via DXP pathway; isopentenyl diphosphate from 1-deoxy-D-xylulose 5-phosphate: step 3/6. In terms of biological role, catalyzes the phosphorylation of the position 2 hydroxy group of 4-diphosphocytidyl-2C-methyl-D-erythritol. In Actinobacillus succinogenes (strain ATCC 55618 / DSM 22257 / CCUG 43843 / 130Z), this protein is 4-diphosphocytidyl-2-C-methyl-D-erythritol kinase.